Reading from the N-terminus, the 482-residue chain is tRNA sulfurtransferase (482 aa).

The region spanning 61-165 is the THUMP domain; the sequence is LAIRDALTRI…DDRLLLIKGR (105 aa). Residues 183-184, lysine 265, glycine 287, and glutamine 296 each bind ATP; that span reads LI. Cysteine 344 and cysteine 456 are disulfide-bonded. Residues 404–482 enclose the Rhodanese domain; sequence FGANDVILDI…GFANVKVYRP (79 aa). Cysteine 456 serves as the catalytic Cysteine persulfide intermediate.

Belongs to the ThiI family.

The protein resides in the cytoplasm. It carries out the reaction [ThiI sulfur-carrier protein]-S-sulfanyl-L-cysteine + a uridine in tRNA + 2 reduced [2Fe-2S]-[ferredoxin] + ATP + H(+) = [ThiI sulfur-carrier protein]-L-cysteine + a 4-thiouridine in tRNA + 2 oxidized [2Fe-2S]-[ferredoxin] + AMP + diphosphate. It catalyses the reaction [ThiS sulfur-carrier protein]-C-terminal Gly-Gly-AMP + S-sulfanyl-L-cysteinyl-[cysteine desulfurase] + AH2 = [ThiS sulfur-carrier protein]-C-terminal-Gly-aminoethanethioate + L-cysteinyl-[cysteine desulfurase] + A + AMP + 2 H(+). It participates in cofactor biosynthesis; thiamine diphosphate biosynthesis. Functionally, catalyzes the ATP-dependent transfer of a sulfur to tRNA to produce 4-thiouridine in position 8 of tRNAs, which functions as a near-UV photosensor. Also catalyzes the transfer of sulfur to the sulfur carrier protein ThiS, forming ThiS-thiocarboxylate. This is a step in the synthesis of thiazole, in the thiamine biosynthesis pathway. The sulfur is donated as persulfide by IscS. The chain is tRNA sulfurtransferase from Salmonella typhi.